A 263-amino-acid polypeptide reads, in one-letter code: 3-deoxy-manno-octulosonate cytidylyltransferase 2 (263 aa).

It belongs to the KdsB family.

It localises to the cytoplasm. The catalysed reaction is 3-deoxy-alpha-D-manno-oct-2-ulosonate + CTP = CMP-3-deoxy-beta-D-manno-octulosonate + diphosphate. It participates in nucleotide-sugar biosynthesis; CMP-3-deoxy-D-manno-octulosonate biosynthesis; CMP-3-deoxy-D-manno-octulosonate from 3-deoxy-D-manno-octulosonate and CTP: step 1/1. Its pathway is bacterial outer membrane biogenesis; lipopolysaccharide biosynthesis. Functionally, activates KDO (a required 8-carbon sugar) for incorporation into bacterial lipopolysaccharide in Gram-negative bacteria. The protein is 3-deoxy-manno-octulosonate cytidylyltransferase 2 of Paraburkholderia phytofirmans (strain DSM 17436 / LMG 22146 / PsJN) (Burkholderia phytofirmans).